The sequence spans 197 residues: Phosphoheptose isomerase (197 aa).

The SIS domain occupies 34–196; that stretch reads MVHCLLSGNK…DHTLFPQDEQ (163 aa). 49–51 lines the substrate pocket; the sequence is NGG. Zn(2+)-binding residues include histidine 58 and glutamate 62. Residues glutamate 62, 91–92, 117–119, serine 122, and glutamine 172 contribute to the substrate site; these read ND and STS. Residues glutamine 172 and histidine 180 each contribute to the Zn(2+) site.

Belongs to the SIS family. GmhA subfamily. In terms of assembly, homotetramer. Requires Zn(2+) as cofactor.

The protein resides in the cytoplasm. The catalysed reaction is 2 D-sedoheptulose 7-phosphate = D-glycero-alpha-D-manno-heptose 7-phosphate + D-glycero-beta-D-manno-heptose 7-phosphate. The protein operates within carbohydrate biosynthesis; D-glycero-D-manno-heptose 7-phosphate biosynthesis; D-glycero-alpha-D-manno-heptose 7-phosphate and D-glycero-beta-D-manno-heptose 7-phosphate from sedoheptulose 7-phosphate: step 1/1. Catalyzes the isomerization of sedoheptulose 7-phosphate in D-glycero-D-manno-heptose 7-phosphate. This is Phosphoheptose isomerase from Shewanella halifaxensis (strain HAW-EB4).